The chain runs to 163 residues: Large ribosomal subunit protein bL17 (163 aa).

Residues 127 to 163 (KEVKKAKSRRGGKAKKAEGTAPEAPAAESESTTEASE) form a disordered region. Basic residues predominate over residues 128 to 140 (EVKKAKSRRGGKA). Over residues 145-163 (GTAPEAPAAESESTTEASE) the composition is skewed to low complexity.

Belongs to the bacterial ribosomal protein bL17 family. In terms of assembly, part of the 50S ribosomal subunit. Contacts protein L32.

The chain is Large ribosomal subunit protein bL17 from Flavobacterium johnsoniae (strain ATCC 17061 / DSM 2064 / JCM 8514 / BCRC 14874 / CCUG 350202 / NBRC 14942 / NCIMB 11054 / UW101) (Cytophaga johnsonae).